The chain runs to 473 residues: Deoxyribodipyrimidine photo-lyase (473 aa).

Residues 2–134 (PTHLVWFRRD…ICEGFDDSVI (133 aa)) form the Photolyase/cryptochrome alpha/beta domain. (6R)-5,10-methylene-5,6,7,8-tetrahydrofolate is bound by residues Asn109 and Glu110. An FAD-binding site is contributed by Tyr224. Arg228 contacts DNA. 236–240 (TSRLS) lines the FAD pocket. Interaction with DNA regions lie at residues 276-283 (ELIWREFY) and 343-344 (NR). Position 374–376 (374–376 (DGD)) interacts with FAD. Gln406 is a binding site for DNA.

This sequence belongs to the DNA photolyase class-1 family. In terms of assembly, monomer. It depends on FAD as a cofactor. (6R)-5,10-methylene-5,6,7,8-tetrahydrofolate serves as cofactor.

It carries out the reaction cyclobutadipyrimidine (in DNA) = 2 pyrimidine residues (in DNA).. In terms of biological role, involved in repair of UV radiation-induced DNA damage. Catalyzes the light-dependent monomerization (300-600 nm) of cyclobutyl pyrimidine dimers (in cis-syn configuration), which are formed between adjacent bases on the same DNA strand upon exposure to ultraviolet radiation. This chain is Deoxyribodipyrimidine photo-lyase (phrB), found in Salmonella typhimurium (strain LT2 / SGSC1412 / ATCC 700720).